The primary structure comprises 1567 residues: ABC multidrug transporter MDR1 (1567 aa).

Over residues 1–11 (MASQPPQPPSG) the composition is skewed to pro residues. The segment at 1–37 (MASQPPQPPSGQPDTQYEEYQSEVITETTNRPTPAAD) is disordered. A compositionally biased stretch (polar residues) spans 22–32 (SEVITETTNRP). 3 N-linked (GlcNAc...) asparagine glycosylation sites follow: N149, N157, and N356. In terms of domain architecture, ABC transporter 1 spans 167 to 432 (VQYQDTFLSP…FEEMGWYCPP (266 aa)). 6 helical membrane-spanning segments follow: residues 543-563 (STIA…SLFF), 571-591 (GFFA…LMSI), 636-656 (IPIK…LGGL), 661-681 (AKFF…SAIF), 691-711 (IPQA…YTGF), and 798-818 (LGIL…VSEL). 3 N-linked (GlcNAc...) asparagine glycosylation sites follow: N819, N895, and N912. In terms of domain architecture, ABC transporter 2 spans 891–1134 (FTWRNVTYDI…LLNYFETHGA (244 aa)). 927–934 (GVSGAGKT) contacts ATP. Positions 1172–1202 (ESRHVQQELDRIQSETSKRNEGHGQSAEKEP) are disordered. Residues 1231–1251 (IWGKLLLGLTSALFIGFSFFL) traverse the membrane as a helical segment. Residue N1253 is glycosylated (N-linked (GlcNAc...) asparagine). The next 5 helical transmembrane spans lie at 1257–1277 (AGLQ…SSLV), 1305–1325 (VFLL…GIIA), 1345–1365 (ILLL…QMII), 1372–1392 (ETAG…NGVL), and 1498–1518 (GIGW…YYLI).

This sequence belongs to the ABC transporter superfamily. ABCG family. PDR (TC 3.A.1.205) subfamily.

The protein localises to the cell membrane. It carries out the reaction voriconazole(in) + ATP + H2O = voriconazole(out) + ADP + phosphate + H(+). It catalyses the reaction fluconazole(in) + ATP + H2O = fluconazole(out) + ADP + phosphate + H(+). The enzyme catalyses (R)-miconazole(in) + ATP + H2O = (R)-miconazole(out) + ADP + phosphate + H(+). The catalysed reaction is (S)-miconazole(in) + ATP + H2O = (S)-miconazole(out) + ADP + phosphate + H(+). Its function is as follows. Pleiotropic ABC efflux transporter that may be involved in the modulation susceptibility to a wide range of unrelated cytotoxic compounds. This chain is ABC multidrug transporter MDR1, found in Trichophyton tonsurans (strain CBS 112818) (Scalp ringworm fungus).